The sequence spans 263 residues: uncharacterized protein (263 aa).

The first 22 residues, M1 to G22, serve as a signal peptide directing secretion. Residue C23 is the site of N-palmitoyl cysteine attachment. The S-diacylglycerol cysteine moiety is linked to residue C23.

It belongs to the staphylococcal tandem lipoprotein family.

The protein localises to the cell membrane. This is an uncharacterized protein from Staphylococcus aureus (strain N315).